A 397-amino-acid polypeptide reads, in one-letter code: Elongation factor Tu (397 aa).

Positions 10–206 constitute a tr-type G domain; it reads KPHVNIGTIG…AVDESIPDPV (197 aa). The segment at 19-26 is G1; sequence GHVDHGKT. 19–26 provides a ligand contact to GTP; the sequence is GHVDHGKT. T26 serves as a coordination point for Mg(2+). The segment at 62–66 is G2; sequence GITIN. A G3 region spans residues 83 to 86; it reads DAPG. GTP-binding positions include 83 to 87 and 138 to 141; these read DAPGH and NKSD. Positions 138 to 141 are G4; sequence NKSD. Residues 176–178 form a G5 region; it reads SAL.

The protein belongs to the TRAFAC class translation factor GTPase superfamily. Classic translation factor GTPase family. EF-Tu/EF-1A subfamily. In terms of assembly, monomer.

The protein localises to the cytoplasm. It carries out the reaction GTP + H2O = GDP + phosphate + H(+). In terms of biological role, GTP hydrolase that promotes the GTP-dependent binding of aminoacyl-tRNA to the A-site of ribosomes during protein biosynthesis. In Mycobacteroides abscessus (strain ATCC 19977 / DSM 44196 / CCUG 20993 / CIP 104536 / JCM 13569 / NCTC 13031 / TMC 1543 / L948) (Mycobacterium abscessus), this protein is Elongation factor Tu.